The primary structure comprises 195 residues: Probable thymidylate kinase (195 aa).

7-14 (GIDGVGKT) is a binding site for ATP.

This sequence belongs to the thymidylate kinase family.

It carries out the reaction dTMP + ATP = dTDP + ADP. The chain is Probable thymidylate kinase from Methanosphaera stadtmanae (strain ATCC 43021 / DSM 3091 / JCM 11832 / MCB-3).